The chain runs to 413 residues: Glucose-1-phosphate adenylyltransferase (413 aa).

Alpha-D-glucose 1-phosphate is bound by residues tyrosine 102, glycine 167, 182–183 (EK), and serine 200.

It belongs to the bacterial/plant glucose-1-phosphate adenylyltransferase family. In terms of assembly, homotetramer.

The enzyme catalyses alpha-D-glucose 1-phosphate + ATP + H(+) = ADP-alpha-D-glucose + diphosphate. Its pathway is glycan biosynthesis; glycogen biosynthesis. Involved in the biosynthesis of ADP-glucose, a building block required for the elongation reactions to produce glycogen. Catalyzes the reaction between ATP and alpha-D-glucose 1-phosphate (G1P) to produce pyrophosphate and ADP-Glc. The polypeptide is Glucose-1-phosphate adenylyltransferase (Deinococcus deserti (strain DSM 17065 / CIP 109153 / LMG 22923 / VCD115)).